The following is a 152-amino-acid chain: Deoxyuridine 5'-triphosphate nucleotidohydrolase (152 aa).

Substrate is bound by residues 71–73 (RSG), Asn-84, 88–90 (LID), and Met-98.

This sequence belongs to the dUTPase family. Mg(2+) serves as cofactor.

The catalysed reaction is dUTP + H2O = dUMP + diphosphate + H(+). It participates in pyrimidine metabolism; dUMP biosynthesis; dUMP from dCTP (dUTP route): step 2/2. In terms of biological role, this enzyme is involved in nucleotide metabolism: it produces dUMP, the immediate precursor of thymidine nucleotides and it decreases the intracellular concentration of dUTP so that uracil cannot be incorporated into DNA. This chain is Deoxyuridine 5'-triphosphate nucleotidohydrolase, found in Coxiella burnetii (strain RSA 331 / Henzerling II).